Consider the following 124-residue polypeptide: Small ribosomal subunit protein uS13c (124 aa).

The interval 100-124 is disordered; it reads GQRTRTNARTRKGKVKTAVAKKKGR. Residues 101 to 124 are compositionally biased toward basic residues; sequence QRTRTNARTRKGKVKTAVAKKKGR.

It belongs to the universal ribosomal protein uS13 family. Part of the 30S ribosomal subunit.

It is found in the plastid. Its subcellular location is the chloroplast. In terms of biological role, located at the top of the head of the 30S subunit, it contacts several helices of the 16S rRNA. The polypeptide is Small ribosomal subunit protein uS13c (Emiliania huxleyi (Coccolithophore)).